Consider the following 529-residue polypeptide: MGAFTFKHSFFGSFVECSGVLQTVFIFLLIPCCLADKRAPPLIPNVPLLWVWNAPTEFCIGGTNQPLDMSFFSIVGTPRKNITGQSITLYYVDRLGYYPYIDPHTGAIVHGGLPQLMNLQQHLRKSRQDILFYMPTDSVGLAVIDWEEWRPTWTRNWRPKDIYRNKSIELVKSQHPQYNHSYAVAVAKRDFERTGKAFMLETLKLGKSLRPSSLWGYYLFPDCYNTHFTKPNYDGHCPPIELQRNNDLQWLWNDSTALYPSVYLTSRVRSSQNGALYVRNRVHESIRVSKLMDDKNPLPIYVYIRLVFTDQTTTFLELDDLVHSVGEIVPLGVSGIIIWGSLSLTRSLVSCIGLENYMKGTLLPYLINVTLAAKMCGQVLCKNQGICTRKDWNTNTYLHLNATNFDIELQQNGKFVVHGKPSLEDLQEFSKNFHCSCYTNVACKDRLDVHNVRSVNVCTANNICIDAVLNFPSLDDDDEPPITDDTSQNQDSISDITSSAPPSSHILPKDLSWCLFLLSIFSQHWKYLL.

Positions 1–35 (MGAFTFKHSFFGSFVECSGVLQTVFIFLLIPCCLA) are cleaved as a signal peptide. Intrachain disulfides connect Cys59–Cys351 and Cys223–Cys237. An N-linked (GlcNAc...) asparagine glycan is attached at Asn81. Glu147 acts as the Proton donor in catalysis. N-linked (GlcNAc...) asparagine glycosylation is found at Asn165 and Asn179. Asn253 and Asn368 each carry an N-linked (GlcNAc...) asparagine glycan. Intrachain disulfides connect Cys376-Cys387, Cys381-Cys435, and Cys437-Cys464. An N-linked (GlcNAc...) asparagine glycan is attached at Asn401. The tract at residues 478-502 (DEPPITDDTSQNQDSISDITSSAPP) is disordered. The segment covering 487-502 (SQNQDSISDITSSAPP) has biased composition (polar residues). The GPI-anchor amidated serine moiety is linked to residue Ser492. The propeptide at 493–529 (ISDITSSAPPSSHILPKDLSWCLFLLSIFSQHWKYLL) is removed in mature form.

It belongs to the glycosyl hydrolase 56 family. Endoproteolysis (toward the C-terminus producing two disulfide-linked fragments) could activate PH-20. In terms of tissue distribution, testis.

Its subcellular location is the cell membrane. The catalysed reaction is Random hydrolysis of (1-&gt;4)-linkages between N-acetyl-beta-D-glucosamine and D-glucuronate residues in hyaluronate.. Functionally, involved in sperm-egg adhesion. Upon fertilization sperm must first penetrate a layer of cumulus cells that surrounds the egg before reaching the zona pellucida. The cumulus cells are embedded in a matrix containing hyaluronic acid which is formed prior to ovulation. This protein aids in penetrating the layer of cumulus cells by digesting hyaluronic acid. The protein is Hyaluronidase PH-20 (SPAM1) of Cavia porcellus (Guinea pig).